A 347-amino-acid polypeptide reads, in one-letter code: LRP2-binding protein (347 aa).

The stretch at 59 to 92 (TLAYFLRGQLYFEEGWYEEALEQFEEIKEKDHQA) is one TPR repeat. Sel1-like repeat units follow at residues 93–125 (TYQL…DSPC), 133–168 (FAAA…DNGN), 173–206 (VKAQ…GNGN), 207–242 (LESQ…ERGN), 243–277 (VYAQ…EVHD), and 297–332 (AMAS…RLNP).

As to quaternary structure, interacts with LRP2.

It localises to the cytoplasm. In terms of biological role, may act as an adapter that regulates LRP2 function. The sequence is that of LRP2-binding protein (LRP2BP) from Homo sapiens (Human).